The following is a 595-amino-acid chain: Sulfite reductase [NADPH] flavoprotein alpha-component (595 aa).

In terms of domain architecture, Flavodoxin-like spans 59–197 (ITVLSASQTG…KADIWRREIV (139 aa)). FMN is bound by residues 65-70 (SQTGNA), 112-115 (STQG), and 148-157 (LGDSSYTYFA). The 215-residue stretch at 230–444 (EEPFTAHLVV…IEHNDNFRLP (215 aa)) folds into the FAD-binding FR-type domain. FAD is bound by residues Thr318, Phe352, 382–385 (RLYS), 400–402 (TVS), Tyr406, and 415–418 (GGAS). NADP(+) is bound by residues 515–516 (SQ), 521–525 (KIYVQ), and Asp557. Tyr595 provides a ligand contact to FAD.

This sequence belongs to the NADPH-dependent sulphite reductase flavoprotein subunit CysJ family. The protein in the N-terminal section; belongs to the flavodoxin family. It in the C-terminal section; belongs to the flavoprotein pyridine nucleotide cytochrome reductase family. Alpha(8)-beta(8). The alpha component is a flavoprotein, the beta component is a hemoprotein. It depends on FAD as a cofactor. FMN is required as a cofactor.

It carries out the reaction hydrogen sulfide + 3 NADP(+) + 3 H2O = sulfite + 3 NADPH + 4 H(+). Its pathway is sulfur metabolism; hydrogen sulfide biosynthesis; hydrogen sulfide from sulfite (NADPH route): step 1/1. Functionally, component of the sulfite reductase complex that catalyzes the 6-electron reduction of sulfite to sulfide. This is one of several activities required for the biosynthesis of L-cysteine from sulfate. The flavoprotein component catalyzes the electron flow from NADPH -&gt; FAD -&gt; FMN to the hemoprotein component. The protein is Sulfite reductase [NADPH] flavoprotein alpha-component of Baumannia cicadellinicola subsp. Homalodisca coagulata.